Consider the following 311-residue polypeptide: Catechol 1,2-dioxygenase (311 aa).

Tyrosine 164 is a catechol binding site. Tyrosine 164, tyrosine 200, histidine 224, and histidine 226 together coordinate Fe cation. Position 224 to 226 (224 to 226) interacts with catechol; the sequence is HIH.

This sequence belongs to the intradiol ring-cleavage dioxygenase family. Homodimer. Fe(3+) serves as cofactor.

It carries out the reaction catechol + O2 = cis,cis-muconate + 2 H(+). Its pathway is aromatic compound metabolism; beta-ketoadipate pathway; 5-oxo-4,5-dihydro-2-furylacetate from catechol: step 1/3. The sequence is that of Catechol 1,2-dioxygenase from Acinetobacter baylyi (strain ATCC 33305 / BD413 / ADP1).